A 5088-amino-acid chain; its full sequence is Replicase polyprotein 1ab (5088 aa).

Residues 26 to 46 (VTNVIQYWTPILTMLLLAIYI) traverse the membrane as a helical segment. The disordered stretch occupies residues 301–323 (EIEDDTEAEETQKTKRKGKLQPQ). 5 helical membrane-spanning segments follow: residues 343–363 (HLTF…MSPT), 1132–1152 (GLFL…AITI), 1156–1176 (TMMM…HLLL), 1201–1221 (YGCL…LAYI), and 1250–1270 (ILIP…VSYV). Catalysis depends on for 3C-like proteinase residues His1434 and Cys1539. The next 2 membrane-spanning stretches (helical) occupy residues 1729-1749 (FTHT…LFFV) and 1758-1778 (ILSS…YGLV). The disordered stretch occupies residues 3093 to 3112 (KPNCPMVPSEVPVRNKHKSA). An ExoN domain is found at 4351-4616 (MNIVMDDCIC…MTQCIYQSFV (266 aa)). Residues Asp4362, Glu4364, and Asp4481 contribute to the active site. The Zn(2+) site is built by Cys4498, Cys4504, Cys4522, and His4525. Residues His4599, Asp4604, Lys4880, Asp4969, Lys4998, and Glu5035 contribute to the active site. Positions 4844 to 5088 (LNNHAALAKA…RQSVFRYSPK (245 aa)) constitute a Nidovirus-type SAM-dependent 2'-O-MTase domain.

Homodimer. Specific enzymatic cleavages in vivo by its own protease yield mature proteins. 3CL-PRO is autocatalytically processed.

The protein localises to the membrane. It catalyses the reaction a 5'-end (5'-triphosphoguanosine)-ribonucleoside in mRNA + S-adenosyl-L-methionine = a 5'-end (N(7)-methyl 5'-triphosphoguanosine)-ribonucleoside in mRNA + S-adenosyl-L-homocysteine. It carries out the reaction RNA(n) + a ribonucleoside 5'-triphosphate = RNA(n+1) + diphosphate. The enzyme catalyses ATP + H2O = ADP + phosphate + H(+). The catalysed reaction is a 5'-end (N(7)-methyl 5'-triphosphoguanosine)-ribonucleoside in mRNA + S-adenosyl-L-methionine = a 5'-end (N(7)-methyl 5'-triphosphoguanosine)-(2'-O-methyl-ribonucleoside) in mRNA + S-adenosyl-L-homocysteine + H(+). Functionally, cysteine protease responsible for the majority of cleavages of the polyprotein. Recognizes substrates containing the core sequence [NT]-[EHKQSY]-|-[AGNST]. Its function is as follows. The helicase which contains a zinc finger structure displays RNA and DNA duplex-unwinding activities with 5' to 3' polarity. RNA-directed RNA polymerase that catalyzes the transcription of viral genomic and subgenomic RNAs. In terms of biological role, catalyzes the RNA N7-guanylyltransferase reaction to methylate the core cap structure GpppN-RNA into the type-0 cap (m)GpppN-RNA. This Ochlerotatus harrisoni (CAVV) protein is Replicase polyprotein 1ab.